Reading from the N-terminus, the 322-residue chain is ADP,ATP carrier protein (322 aa).

Solcar repeat units lie at residues 25-118 (STFF…FKKM), 130-222 (KWFA…LKPV), and 230-316 (GNFL…VQLL). 5 helical membrane passes run 27 to 54 (FFFD…VKLL), 95 to 119 (TANV…KKMF), 128 to 148 (YAKW…ASLL), 198 to 219 (FGPS…YDTL), and 233 to 253 (LASF…SYPL). Residues R100 and K112 each coordinate ADP. R257 lines the ADP pocket. Positions 257 to 262 (RRRMMM) are important for transport activity. The Nucleotide carrier signature motif signature appears at 257-262 (RRRMMM). The chain crosses the membrane as a helical span at residues 293-313 (AGANILRGVAGAGVLSIYDQV).

The protein belongs to the mitochondrial carrier (TC 2.A.29) family. As to quaternary structure, monomer.

Its subcellular location is the mitochondrion inner membrane. The catalysed reaction is ADP(in) + ATP(out) = ADP(out) + ATP(in). With respect to regulation, the matrix-open state (m-state) is inhibited by the membrane-permeable bongkrekic acid (BKA). The cytoplasmic-open state (c-state) is inhibited by the membrane-impermeable toxic inhibitor carboxyatractyloside (CATR). Functionally, ADP:ATP antiporter that mediates import of ADP into the mitochondrial matrix for ATP synthesis, and export of ATP out to fuel the cell. Cycles between the cytoplasmic-open state (c-state) and the matrix-open state (m-state): operates by the alternating access mechanism with a single substrate-binding site intermittently exposed to either the cytosolic (c-state) or matrix (m-state) side of the inner mitochondrial membrane. The chain is ADP,ATP carrier protein (anc1) from Schizosaccharomyces pombe (strain 972 / ATCC 24843) (Fission yeast).